We begin with the raw amino-acid sequence, 559 residues long: Urocanate hydratase (559 aa).

Residues 50 to 51 (GG), Gln128, 174 to 176 (GMG), Asp194, Arg199, 240 to 241 (NA), 261 to 265 (QTSAH), 271 to 272 (YI), and Tyr320 contribute to the NAD(+) site. Residue Cys408 is part of the active site. Position 490 (Gly490) interacts with NAD(+).

Belongs to the urocanase family. NAD(+) serves as cofactor.

It localises to the cytoplasm. It carries out the reaction 4-imidazolone-5-propanoate = trans-urocanate + H2O. The protein operates within amino-acid degradation; L-histidine degradation into L-glutamate; N-formimidoyl-L-glutamate from L-histidine: step 2/3. Functionally, catalyzes the conversion of urocanate to 4-imidazolone-5-propionate. This chain is Urocanate hydratase, found in Halalkalibacterium halodurans (strain ATCC BAA-125 / DSM 18197 / FERM 7344 / JCM 9153 / C-125) (Bacillus halodurans).